The primary structure comprises 224 residues: Ribose-5-phosphate isomerase A (224 aa).

Substrate is bound by residues 26-29, 81-84, and 94-97; these read TGST, DGAD, and KGGG. E103 functions as the Proton acceptor in the catalytic mechanism. Residue K121 participates in substrate binding.

It belongs to the ribose 5-phosphate isomerase family. In terms of assembly, homodimer.

It catalyses the reaction aldehydo-D-ribose 5-phosphate = D-ribulose 5-phosphate. The protein operates within carbohydrate degradation; pentose phosphate pathway; D-ribose 5-phosphate from D-ribulose 5-phosphate (non-oxidative stage): step 1/1. Functionally, catalyzes the reversible conversion of ribose-5-phosphate to ribulose 5-phosphate. This Listeria innocua serovar 6a (strain ATCC BAA-680 / CLIP 11262) protein is Ribose-5-phosphate isomerase A.